We begin with the raw amino-acid sequence, 454 residues long: MINIMEVTETNKMVEKENLDVRTITMGINLLDCAGPDLAEVNEKIYNKITTLAKDLVSTGEEIAKEFGVPIVNKRISITPISLVGSSACKTPEDYVTIAKTLDKAAHTVGVNFIGGYSAVVSKGMTKSDELLIRSIPQALAQTELICSSVNVGSTKTGINMDAVRLMGEIVKETAELTKDKDSLGCAKLVVLCNAPDDNPFMAGAFHGVTEDDAIINVGVSGPGVVKYALESVRGKSFEVLCETIKKTAFKITRVGQLVAQEASKRLGVPFGIIDLSLAPTPAVGDSVAEILEEIGLERAGAPGTTAALAMLNDQVKKGGVMASSYVGGLSGAFIPVSEDQGMIDAVNEGSLTIEKLEAMTCVCSVGLDMIAIPGDTPATTISGIIADEAAIGMVNQKTTAVRVIPVVGKGVGETVEFGGLLGYAPIMPVNKFDCSAFVNRVGRIPAPIHSFKN.

Belongs to the UPF0210 family. As to quaternary structure, homodimer.

The polypeptide is UPF0210 protein EUBELI_01067 (Lachnospira eligens (strain ATCC 27750 / DSM 3376 / VPI C15-48 / C15-B4) (Eubacterium eligens)).